An 81-amino-acid chain; its full sequence is Defensin-like protein 43 (81 aa).

Positions 1–27 are cleaved as a signal peptide; it reads MGITKTSVTFLFLLILAAFVSNYNVLA. Cystine bridges form between cysteine 40–cysteine 79, cysteine 44–cysteine 67, cysteine 53–cysteine 77, and cysteine 57–cysteine 78.

The protein belongs to the DEFL family.

The protein resides in the secreted. The protein is Defensin-like protein 43 of Arabidopsis thaliana (Mouse-ear cress).